A 138-amino-acid chain; its full sequence is HTH-type transcriptional regulator CymR (138 aa).

The HTH rrf2-type domain maps to 2–125 (KISTKGRYGL…DSTTLEDLAS (124 aa)). The segment at residues 28 to 51 (LKSIAQTNNLSEHYLEQLVSPLRN) is a DNA-binding region (H-T-H motif).

Homodimer. Forms homotetramers at higher concentrations of protein. Forms CymR(2):CysK(2) or CymR(4):CysK(4) complexes in the absence of O-acetylserine.

Master repressor of cysteine metabolism in B.subtilis. Controls the expression of genes involved either in cysteine synthesis from sulfide (cysK), sulfonates (ssu), or methionine (mccAB) or in cystine uptake (tcyP). Activity of CymR is positively regulated by CysK in response to cysteine availability. When cysteine is present, the pool of O-acetylserine (OAS) is low, which leads to the formation of a CymR-CysK complex and transcriptional repression of the CymR regulon occurs. In the absence of cysteine, the OAS pool is high and the CymR-CysK complex is mostly dissociated, leading to a faster dissociation of CymR from its DNA targets and the lifting of CymR-dependent repression. The sequence is that of HTH-type transcriptional regulator CymR (cymR) from Bacillus subtilis (strain 168).